The following is a 293-amino-acid chain: Caspase-6 (293 aa).

The tract at residues 1-20 (MSSEPPPRRARGPGEEQNMT) is disordered. The propeptide occupies 1 to 23 (MSSEPPPRRARGPGEEQNMTEID). Residues 42–44 (KRR) are tri-arginine exosite. Ser-79 is subject to Phosphoserine. His-121 is an active-site residue. The 130's region stretch occupies residues 125 to 142 (NHIYAYDAKIEIQTLTGL). Cys-163 is a catalytic residue. The propeptide occupies 180–193 (HRTDTPDANLTQVD). Ser-257 bears the Phosphoserine mark. S-palmitoyl cysteine attachment occurs at residues Cys-264 and Cys-277.

The protein belongs to the peptidase C14A family. As to quaternary structure, heterotetramer that consists of two anti-parallel arranged heterodimers, each one formed by a 18 kDa (p18) and a 11 kDa (p11) subunits. Interacts with BIRC6/bruce. Interacts with RIPK3. Heterotetramer that consists of two anti-parallel arranged heterodimers, each one formed by a 18 kDa (Caspase-6 subunit p18) and a 11 kDa (Caspase-6 subunit p11) subunit. Phosphorylated by NUAK1; phosphorylation inhibits self-activation. Phosphorylation at Ser-257 by AMP-activated protein kinase (PRKAA1 or PRKAA2) inhibits autocleavage, preventing caspase activation, thereby preventing hepatocyte apoptosis. Post-translationally, palmitoylation by ZDHHC17 blocks dimerization and subsequent activation, leading to inhibit the cysteine protease activity. In terms of processing, can be cleaved and activated by different caspases, depending on the context. Cleaved and activated by caspase-8 (CASP8) and subsequently by caspase-3 (CASP3). Can also undergo autoactivation by mediating autocleavage at Asp-179 and Asp-193, while it is not able to cleave its N-terminal disordered prodomain. Cleaved and activated by CASP1, possibly in the context of inflammation.

It localises to the cytoplasm. Its subcellular location is the nucleus. The catalysed reaction is Strict requirement for Asp at position P1 and has a preferred cleavage sequence of Val-Glu-His-Asp-|-.. During activation, the N-terminal disordered prodomain is removed by cleavage. Concomitantly, double cleavage gives rise to a large 18-kDa and a small 11-kDa subunit. The two large and two small subunits then assemble to form the active CASP6 complex. Can be cleaved and activated by different caspases, depending on the context. Cleaved and activated by caspase-8 (CASP8) and subsequently by caspase-3 (CASP3). Can also undergo autoactivation by mediating autocleavage at Asp-179 and Asp-193, while it is not able to cleave its N-terminal disordered prodomain. Intramolecular cleavage at Asp-193 is a prerequisite for CASP6 self-activation. Cleaved and activated by CASP1 in neurons, possibly in the context of inflammation. Phosphorylation at Ser-257 inhibits autocleavage, preventing caspase activation. Its function is as follows. Cysteine protease that plays essential roles in programmed cell death, axonal degeneration, development and innate immunity. Acts as a non-canonical executioner caspase during apoptosis: localizes in the nucleus and cleaves the nuclear structural protein NUMA1 and lamin A/LMNA thereby inducing nuclear shrinkage and fragmentation. Lamin-A/LMNA cleavage is required for chromatin condensation and nuclear disassembly during apoptotic execution. Acts as a regulator of liver damage by promoting hepatocyte apoptosis: in absence of phosphorylation by AMP-activated protein kinase (AMPK), catalyzes cleavage of BID, leading to cytochrome c release, thereby participating in nonalcoholic steatohepatitis. Cleaves PARK7/DJ-1 in cells undergoing apoptosis. Involved in intrinsic apoptosis by mediating cleavage of RIPK1. Furthermore, cleaves many transcription factors such as NF-kappa-B and cAMP response element-binding protein/CREBBP. Cleaves phospholipid scramblase proteins XKR4 and XKR9. In addition to apoptosis, involved in different forms of programmed cell death. Plays an essential role in defense against viruses by acting as a central mediator of the ZBP1-mediated pyroptosis, apoptosis, and necroptosis (PANoptosis), independently of its cysteine protease activity. PANoptosis is a unique inflammatory programmed cell death, which provides a molecular scaffold that allows the interactions and activation of machinery required for inflammasome/pyroptosis, apoptosis and necroptosis. Mechanistically, interacts with RIPK3 and enhances the interaction between RIPK3 and ZBP1, leading to ZBP1-mediated inflammasome activation and cell death. Plays an essential role in axon degeneration during axon pruning which is the remodeling of axons during neurogenesis but not apoptosis. Regulates B-cell programs both during early development and after antigen stimulation. The polypeptide is Caspase-6 (Bos taurus (Bovine)).